We begin with the raw amino-acid sequence, 191 residues long: Chromobox protein homolog 5 (191 aa).

Serine 11, serine 12, serine 13, and serine 14 each carry phosphoserine. The Chromo 1 domain occupies 20-78; sequence YVVEKVLDRRVVKGQVEYLLKWKGFSEEHNTWEPEKNLDCPELISEFMKKYKKMKEGEN. Residue lysine 32 forms a Glycyl lysine isopeptide (Lys-Gly) (interchain with G-Cter in SUMO2) linkage. Lysine 40 bears the N6-acetyllysine mark. The interval 70 to 117 is disordered; sequence YKKMKEGENNKPREKSESNKRKSNFSNSADDIKSKKKREQSNDIARGF. Basic and acidic residues predominate over residues 73–89; that stretch reads MKEGENNKPREKSESNK. Lysine 91 is covalently cross-linked (Glycyl lysine isopeptide (Lys-Gly) (interchain with G-Cter in SUMO2)). Phosphoserine occurs at positions 92, 95, and 97. Residues lysine 102, lysine 106, lysine 154, and lysine 184 each participate in a glycyl lysine isopeptide (Lys-Gly) (interchain with G-Cter in SUMO2) cross-link. A Chromo 2; shadow subtype domain is found at 121–179; that stretch reads LEPEKIIGATDSCGDLMFLMKWKDTDEADLVLAKEANVKCPQIVIAFYEERLTWHAYPE.

In terms of assembly, homodimer. Interacts with histone H3 methylated at 'Lys-9'. Interacts (via Chromo 2; shadow subtype domain) with the MIS12 complex subunit NSL1; the interaction is direct, involves dimeric CBX5, and occurs during interphase. Interacts with POGZ; POGZ and PXVXL motif-containing proteins such as INCENP and TRIM28 compete for interaction with CBX5. Interacts with LRIF1 (via PxVxL motif). Interacts with INCENP. Interacts with TRIM24. Interacts (via the chromoshadow domain) with ATRX; the interaction is direct. Interacts (via the chromoshadow domain) with CHAF1A; the interaction is direct. Interacts (via the chromoshadow domain) with LBR; the interaction is direct. Interacts (via the chromoshadow domain) with NIPBL; the interaction is direct. Interacts (via the chromoshadow domain) with SP100; the interaction is direct. Interacts (via the chromoshadow domain) with STAM2; the interaction is direct. Interacts (via the chromoshadow domain) with TRIM28; the interaction is direct. Interacts (via the chromoshadow domain) with CBX3; the interaction is direct. Interacts with PRR14 (via N-terminus). Interacts with RRP1B. Interacts with HNRNPU (via C-terminus); this interaction is, at least in part, RNA-dependent. Interacts with ZNF263; recruited to the SIX3 promoter along with other proteins involved in chromatin modification and transcriptional corepression where it contributes to transcriptional repression. Interacts with AURKB during mitosis. Interacts with CHAMP1. Interacts with BAHD1. Interacts with HP1BP3. Interacts with CHD3. Interacts with CHD4. Interacts with SMYD5. Interacts with KMT5B. Interacts with KMT5C. (Microbial infection) Interacts with JC virus agnoprotein; this interaction induces the dissociation of CBX5 from LBR, resulting in destabilization of the nuclear envelope. Phosphorylation of HP1 and LBR may be responsible for some of the alterations in chromatin organization and nuclear structure which occur at various times during the cell cycle. Phosphorylated during interphase and possibly hyper-phosphorylated during mitosis. In terms of processing, ubiquitinated.

It is found in the nucleus. The protein localises to the chromosome. Its subcellular location is the centromere. In terms of biological role, component of heterochromatin that recognizes and binds histone H3 tails methylated at 'Lys-9' (H3K9me), leading to epigenetic repression. In contrast, it is excluded from chromatin when 'Tyr-41' of histone H3 is phosphorylated (H3Y41ph). May contribute to the association of heterochromatin with the inner nuclear membrane by interactions with the lamin-B receptor (LBR). Involved in the formation of kinetochore through interaction with the MIS12 complex subunit NSL1. Required for the formation of the inner centromere. This Homo sapiens (Human) protein is Chromobox protein homolog 5 (CBX5).